The primary structure comprises 534 residues: Glucans biosynthesis protein D (534 aa).

Residues 1–26 constitute a signal peptide (tat-type signal); it reads MQRRDFIRNASLALAAFGLPSLPACA.

Belongs to the OpgD/OpgG family. In terms of processing, predicted to be exported by the Tat system. The position of the signal peptide cleavage has not been experimentally proven.

It is found in the periplasm. It functions in the pathway glycan metabolism; osmoregulated periplasmic glucan (OPG) biosynthesis. Its function is as follows. Probably involved in the control of the structural glucose backbone of osmoregulated periplasmic glucans (OPGs). The protein is Glucans biosynthesis protein D of Stenotrophomonas maltophilia (strain K279a).